Consider the following 282-residue polypeptide: NADPH-dependent 7-cyano-7-deazaguanine reductase (282 aa).

88 to 90 contributes to the substrate binding site; it reads IES. 90–91 provides a ligand contact to NADPH; that stretch reads SK. Catalysis depends on cysteine 190, which acts as the Thioimide intermediate. The active-site Proton donor is the aspartate 197. Position 229–230 (229–230) interacts with substrate; it reads HE. 258-259 contacts NADPH; the sequence is RG.

This sequence belongs to the GTP cyclohydrolase I family. QueF type 2 subfamily. Homodimer.

The protein resides in the cytoplasm. The enzyme catalyses 7-aminomethyl-7-carbaguanine + 2 NADP(+) = 7-cyano-7-deazaguanine + 2 NADPH + 3 H(+). It participates in tRNA modification; tRNA-queuosine biosynthesis. In terms of biological role, catalyzes the NADPH-dependent reduction of 7-cyano-7-deazaguanine (preQ0) to 7-aminomethyl-7-deazaguanine (preQ1). This chain is NADPH-dependent 7-cyano-7-deazaguanine reductase, found in Shigella dysenteriae serotype 1 (strain Sd197).